The primary structure comprises 78 residues: Cytochrome c oxidase subunit 6b-3 (78 aa).

The region spanning 22–65 is the CHCH domain; that stretch reads TRHCFTRYIEFHRCTTAKGEDANECERFAKYYRALCPGEWVDKW. A Cx9C motif motif is present at residues 25–35; it reads CFTRYIEFHRC. 2 cysteine pairs are disulfide-bonded: Cys-25/Cys-57 and Cys-35/Cys-46. A Cx10C motif motif is present at residues 46–57; it reads CERFAKYYRALC.

This sequence belongs to the cytochrome c oxidase subunit 6B (TC 3.D.4.8) family. Expressed in the whole plant.

Its subcellular location is the mitochondrion. This protein is one of the nuclear-coded polypeptide chains of cytochrome c oxidase, the terminal oxidase in mitochondrial electron transport. This protein may be one of the heme-binding subunits of the oxidase. The chain is Cytochrome c oxidase subunit 6b-3 (COX6B-3) from Arabidopsis thaliana (Mouse-ear cress).